A 272-amino-acid polypeptide reads, in one-letter code: Carbonic anhydrase (272 aa).

3 residues coordinate Zn(2+): Cys-39, His-98, and Cys-101.

This sequence belongs to the beta-class carbonic anhydrase family. In terms of assembly, a hexamer formed by a trimer of dimers. Purified from carboxysomes with the both RuBisCO subunits and the full-length form of CcmM, probably interacts with the N-terminus of CcmM. Requires Zn(2+) as cofactor.

It is found in the carboxysome. It catalyses the reaction hydrogencarbonate + H(+) = CO2 + H2O. Reversible hydration of carbon dioxide. Essential to photosynthetic carbon dioxide fixation, supplies CO(2) to RuBisCO (ribulose bisphosphate carboxylase, rbcL-rbcS) in the carboxysome. Loss of activity results in limitation of CO(2) availability to RuBisCO located in the cytoplasm. In Synechococcus elongatus (strain ATCC 33912 / PCC 7942 / FACHB-805) (Anacystis nidulans R2), this protein is Carbonic anhydrase.